The chain runs to 248 residues: Probable transcriptional regulatory protein Dde_2325 (248 aa).

Residues 1–15 (MAGHSKWKNIQHRKG) show a composition bias toward basic residues. The interval 1 to 22 (MAGHSKWKNIQHRKGRQDAKKS) is disordered.

Belongs to the TACO1 family.

Its subcellular location is the cytoplasm. In Oleidesulfovibrio alaskensis (strain ATCC BAA-1058 / DSM 17464 / G20) (Desulfovibrio alaskensis), this protein is Probable transcriptional regulatory protein Dde_2325.